A 384-amino-acid polypeptide reads, in one-letter code: MTAMEGASGSSFGIDTILSGAGSGSPGMMNGDFRSLGEARTTDFRSQATPSPCSEIDTVGTAPSSPISVTLEPPEPHLVTDGPQHHHHLHHGQQPPPPSAPPAQSLQPSPQQQPPPQPQSAAQQLGSAAAAPRTSTSSFLIKDILGDSKPLAACAPYSTSVSSPHHTPKQECNAAHESFRPKLEQEDSKTKLDKREDSQSDIKCHGTKEEGDREITSSRESPPVRAKKPRKARTAFSDHQLNQLERSFERQKYLSVQDRMDLAAALNLTDTQVKTWYQNRRTKWKRQTAVGLELLAEAGNYSALQRMFPSPYFYHPSLLGSMDSTTAAAAAAAMYSSMYRTPPAPHPQLQRPLVPRVLIHGLGPGGQPALNPLSNPIPGTPHPR.

Disordered regions lie at residues 1-134 (MTAM…APRT), 154-237 (CAPY…TAFS), and 364-384 (PGGQ…PHPR). Residues 119-134 (QSAAQQLGSAAAAPRT) show a composition bias toward low complexity. The span at 177–217 (ESFRPKLEQEDSKTKLDKREDSQSDIKCHGTKEEGDREITS) shows a compositional bias: basic and acidic residues. Residues 229–288 (PRKARTAFSDHQLNQLERSFERQKYLSVQDRMDLAAALNLTDTQVKTWYQNRRTKWKRQT) constitute a DNA-binding region (homeobox).

It belongs to the BAR homeobox family. In terms of tissue distribution, expressed in the ganglion cell layer of the retina in the eye and in the ventral zone of the dorsal thalamus of the CNS.

The protein localises to the nucleus. Its function is as follows. Potential regulator of neural basic helix-loop-helix genes. It may down-regulate expression of ASCL1 and, within the thalamus, up-regulate NGN2, thereby regulating distinct patterns of neuronal differentiation. This chain is BarH-like 2 homeobox protein (Barhl2), found in Rattus norvegicus (Rat).